A 188-amino-acid polypeptide reads, in one-letter code: Elongation factor P (188 aa).

This sequence belongs to the elongation factor P family.

Its subcellular location is the cytoplasm. It participates in protein biosynthesis; polypeptide chain elongation. Its function is as follows. Involved in peptide bond synthesis. Stimulates efficient translation and peptide-bond synthesis on native or reconstituted 70S ribosomes in vitro. Probably functions indirectly by altering the affinity of the ribosome for aminoacyl-tRNA, thus increasing their reactivity as acceptors for peptidyl transferase. This Chlorobaculum tepidum (strain ATCC 49652 / DSM 12025 / NBRC 103806 / TLS) (Chlorobium tepidum) protein is Elongation factor P.